A 1183-amino-acid polypeptide reads, in one-letter code: DNA-directed RNA polymerase subunit beta (1183 aa).

The protein belongs to the RNA polymerase beta chain family. The RNAP catalytic core consists of 2 alpha, 1 beta, 1 beta' and 1 omega subunit. When a sigma factor is associated with the core the holoenzyme is formed, which can initiate transcription.

It carries out the reaction RNA(n) + a ribonucleoside 5'-triphosphate = RNA(n+1) + diphosphate. Its function is as follows. DNA-dependent RNA polymerase catalyzes the transcription of DNA into RNA using the four ribonucleoside triphosphates as substrates. In Staphylococcus aureus (strain JH9), this protein is DNA-directed RNA polymerase subunit beta.